The sequence spans 364 residues: Fructose-1,6-bisphosphatase class 1 1 (364 aa).

Mg(2+) contacts are provided by E99, D121, L123, and D124. Substrate contacts are provided by residues 124-127 (DGSS) and N220. Position 292 (E292) interacts with Mg(2+).

The protein belongs to the FBPase class 1 family. Homotetramer. Mg(2+) is required as a cofactor.

The protein localises to the cytoplasm. The catalysed reaction is beta-D-fructose 1,6-bisphosphate + H2O = beta-D-fructose 6-phosphate + phosphate. It participates in carbohydrate biosynthesis; gluconeogenesis. In Albidiferax ferrireducens (strain ATCC BAA-621 / DSM 15236 / T118) (Rhodoferax ferrireducens), this protein is Fructose-1,6-bisphosphatase class 1 1.